We begin with the raw amino-acid sequence, 750 residues long: Photosystem I P700 chlorophyll a apoprotein A1 (750 aa).

8 helical membrane-spanning segments follow: residues 70–93 (VFSA…FHGA), 156–179 (LYCT…FHYH), 195–219 (LNHH…HVSL), 291–309 (TAHH…GHMY), 346–369 (WHAQ…HHMY), 385–411 (LSLF…IFMV), 433–455 (AIVS…LYIH), and 531–549 (FLVH…LILL). The [4Fe-4S] cluster site is built by cysteine 573 and cysteine 582. The next 2 helical transmembrane spans lie at 589–610 (HVFL…HFSW) and 664–686 (LSAY…MFLF). A chlorophyll a'-binding site is contributed by histidine 675. Methionine 683 and tyrosine 691 together coordinate chlorophyll a. Tryptophan 692 is a binding site for phylloquinone. A helical membrane pass occupies residues 724-744 (AVGVAHYLLGGIVTTWAFFLA).

The protein belongs to the PsaA/PsaB family. The PsaA/B heterodimer binds the P700 chlorophyll special pair and subsequent electron acceptors. PSI consists of a core antenna complex that captures photons, and an electron transfer chain that converts photonic excitation into a charge separation. The eukaryotic PSI reaction center is composed of at least 11 subunits. The cofactor is P700 is a chlorophyll a/chlorophyll a' dimer, A0 is one or more chlorophyll a, A1 is one or both phylloquinones and FX is a shared 4Fe-4S iron-sulfur center..

The protein localises to the plastid. It is found in the chloroplast thylakoid membrane. It carries out the reaction reduced [plastocyanin] + hnu + oxidized [2Fe-2S]-[ferredoxin] = oxidized [plastocyanin] + reduced [2Fe-2S]-[ferredoxin]. Its function is as follows. PsaA and PsaB bind P700, the primary electron donor of photosystem I (PSI), as well as the electron acceptors A0, A1 and FX. PSI is a plastocyanin-ferredoxin oxidoreductase, converting photonic excitation into a charge separation, which transfers an electron from the donor P700 chlorophyll pair to the spectroscopically characterized acceptors A0, A1, FX, FA and FB in turn. Oxidized P700 is reduced on the lumenal side of the thylakoid membrane by plastocyanin. The sequence is that of Photosystem I P700 chlorophyll a apoprotein A1 from Pinus koraiensis (Korean pine).